Reading from the N-terminus, the 252-residue chain is tRNA (guanine-N(1)-)-methyltransferase (252 aa).

S-adenosyl-L-methionine-binding positions include G110 and 130–135 (VGDFVL).

This sequence belongs to the RNA methyltransferase TrmD family. In terms of assembly, homodimer.

The protein resides in the cytoplasm. It carries out the reaction guanosine(37) in tRNA + S-adenosyl-L-methionine = N(1)-methylguanosine(37) in tRNA + S-adenosyl-L-homocysteine + H(+). Functionally, specifically methylates guanosine-37 in various tRNAs. This is tRNA (guanine-N(1)-)-methyltransferase from Magnetococcus marinus (strain ATCC BAA-1437 / JCM 17883 / MC-1).